The chain runs to 330 residues: tRNA-modifying protein YgfZ (330 aa).

Positions 28 and 190 each coordinate folate.

The protein belongs to the tRNA-modifying YgfZ family.

The protein localises to the cytoplasm. In terms of biological role, folate-binding protein involved in regulating the level of ATP-DnaA and in the modification of some tRNAs. It is probably a key factor in regulatory networks that act via tRNA modification, such as initiation of chromosomal replication. The sequence is that of tRNA-modifying protein YgfZ from Yersinia pestis bv. Antiqua (strain Antiqua).